Here is a 435-residue protein sequence, read N- to C-terminus: S-phase entry cyclin-5 (435 aa).

2 disordered regions span residues 36–70 and 104–126; these read KRAL…NPLS and NDRT…DAAS. A compositionally biased stretch (low complexity) spans 41–52; the sequence is KNDSSSKQQVQD. A compositionally biased stretch (acidic residues) spans 110 to 124; it reads EQEEEEEEEGEDDDA.

The protein belongs to the cyclin family. Cyclin AB subfamily.

In terms of biological role, required for efficient progression through S phase and possibly for the normal progression through meiosis. Interacts with CDC28. The sequence is that of S-phase entry cyclin-5 (CLB5) from Saccharomyces cerevisiae (strain ATCC 204508 / S288c) (Baker's yeast).